The chain runs to 248 residues: Malonyl-[acyl-carrier protein] O-methyltransferase 2 (248 aa).

The protein belongs to the methyltransferase superfamily.

The catalysed reaction is malonyl-[ACP] + S-adenosyl-L-methionine = malonyl-[ACP] methyl ester + S-adenosyl-L-homocysteine. The protein operates within cofactor biosynthesis; biotin biosynthesis. Converts the free carboxyl group of a malonyl-thioester to its methyl ester by transfer of a methyl group from S-adenosyl-L-methionine (SAM). It allows to synthesize pimeloyl-ACP via the fatty acid synthetic pathway. This Coxiella burnetii (strain RSA 493 / Nine Mile phase I) protein is Malonyl-[acyl-carrier protein] O-methyltransferase 2.